A 185-amino-acid chain; its full sequence is MKVVVVAGIPGSGSTTVLENTLKELDYLNVNYGDVMLEIAVEKGLVENRDQMRTLPPEVQKDIQRAAAKSIRERSLENNIIVDTHCTIKTPAGFLPGLPVWVLEELEPDMFVLVEADAEEIFTRRISDKTRDRDVESLQEIDLHQQMNRAAAMAYATLTGATVKIVKNHNNQLESAVSEMKSVLE.

8 to 16 contributes to the ATP binding site; the sequence is GIPGSGSTT.

The protein belongs to the archaeal adenylate kinase family.

Its subcellular location is the cytoplasm. The enzyme catalyses AMP + ATP = 2 ADP. The polypeptide is Adenylate kinase (adkA) (Methanothermobacter thermautotrophicus (strain ATCC 29096 / DSM 1053 / JCM 10044 / NBRC 100330 / Delta H) (Methanobacterium thermoautotrophicum)).